The sequence spans 396 residues: Chaperone protein DnaJ 1 (396 aa).

The J domain occupies 10–75 (DYYKVLGVPK…KKRKEYDEAR (66 aa)). Over residues 127–137 (LFNRGGAGPGT) the composition is skewed to gly residues. The tract at residues 127–149 (LFNRGGAGPGTGTRTQPRRGQDI) is disordered. The segment at 163–241 (GATVPLRMSS…CKGSGRAKSS (79 aa)) adopts a CR-type zinc-finger fold. Zn(2+) contacts are provided by Cys176, Cys179, Cys192, Cys195, Cys215, Cys218, Cys229, and Cys232. CXXCXGXG motif repeat units follow at residues 176-183 (CKACSGTG), 192-199 (CPTCVGTG), 215-222 (CPDCKGRG), and 229-236 (CEICKGSG).

Belongs to the DnaJ family. As to quaternary structure, homodimer. Zn(2+) serves as cofactor.

Its subcellular location is the cytoplasm. In terms of biological role, participates actively in the response to hyperosmotic and heat shock by preventing the aggregation of stress-denatured proteins and by disaggregating proteins, also in an autonomous, DnaK-independent fashion. Unfolded proteins bind initially to DnaJ; upon interaction with the DnaJ-bound protein, DnaK hydrolyzes its bound ATP, resulting in the formation of a stable complex. GrpE releases ADP from DnaK; ATP binding to DnaK triggers the release of the substrate protein, thus completing the reaction cycle. Several rounds of ATP-dependent interactions between DnaJ, DnaK and GrpE are required for fully efficient folding. Also involved, together with DnaK and GrpE, in the DNA replication of plasmids through activation of initiation proteins. This chain is Chaperone protein DnaJ 1, found in Streptomyces avermitilis (strain ATCC 31267 / DSM 46492 / JCM 5070 / NBRC 14893 / NCIMB 12804 / NRRL 8165 / MA-4680).